Reading from the N-terminus, the 86-residue chain is Conotoxin Ec15a (86 aa).

The signal sequence occupies residues 1-23; it reads MEKLTILILVATVLLAIQVLGQG. Residues 24 to 49 constitute a propeptide that is removed on maturation; it reads EGEKPPKEWVQQYAAKRLWALMKGPR. Glutamine 50 is subject to Pyrrolidone carboxylic acid.

Belongs to the conotoxin O2 superfamily. Post-translationally, contains 4 disulfide bonds. Expressed by the venom duct.

The protein resides in the secreted. This chain is Conotoxin Ec15a, found in Conus emaciatus (False virgin cone).